The chain runs to 599 residues: Aspartate--tRNA(Asp/Asn) ligase (599 aa).

E174 is a binding site for L-aspartate. The segment at 198-201 (QLFK) is aspartate. R220 is an L-aspartate binding site. Residues 220–222 (RDE) and Q229 contribute to the ATP site. H457 lines the L-aspartate pocket. E491 lines the ATP pocket. R498 is an L-aspartate binding site. Position 543–546 (543–546 (GLDR)) interacts with ATP.

Belongs to the class-II aminoacyl-tRNA synthetase family. Type 1 subfamily. As to quaternary structure, homodimer.

It localises to the cytoplasm. The catalysed reaction is tRNA(Asx) + L-aspartate + ATP = L-aspartyl-tRNA(Asx) + AMP + diphosphate. Its function is as follows. Aspartyl-tRNA synthetase with relaxed tRNA specificity since it is able to aspartylate not only its cognate tRNA(Asp) but also tRNA(Asn). Reaction proceeds in two steps: L-aspartate is first activated by ATP to form Asp-AMP and then transferred to the acceptor end of tRNA(Asp/Asn). This is Aspartate--tRNA(Asp/Asn) ligase from Paraburkholderia phymatum (strain DSM 17167 / CIP 108236 / LMG 21445 / STM815) (Burkholderia phymatum).